A 927-amino-acid polypeptide reads, in one-letter code: Valine--tRNA ligase (927 aa).

Positions 45 to 55 (PNVTGSLHMGH) match the 'HIGH' region motif. The 'KMSKS' region motif lies at 571–575 (KMSKS). Position 574 (lysine 574) interacts with ATP. Positions 856 to 917 (SLIDLAAEAA…EYRDAQDKLA (62 aa)) form a coiled coil.

This sequence belongs to the class-I aminoacyl-tRNA synthetase family. ValS type 1 subfamily. In terms of assembly, monomer.

The protein resides in the cytoplasm. It catalyses the reaction tRNA(Val) + L-valine + ATP = L-valyl-tRNA(Val) + AMP + diphosphate. Its function is as follows. Catalyzes the attachment of valine to tRNA(Val). As ValRS can inadvertently accommodate and process structurally similar amino acids such as threonine, to avoid such errors, it has a 'posttransfer' editing activity that hydrolyzes mischarged Thr-tRNA(Val) in a tRNA-dependent manner. The sequence is that of Valine--tRNA ligase from Mesorhizobium japonicum (strain LMG 29417 / CECT 9101 / MAFF 303099) (Mesorhizobium loti (strain MAFF 303099)).